A 318-amino-acid polypeptide reads, in one-letter code: Porphobilinogen deaminase (318 aa).

An S-(dipyrrolylmethanemethyl)cysteine modification is found at Cys-241.

It belongs to the HMBS family. Monomer. The cofactor is dipyrromethane.

It catalyses the reaction 4 porphobilinogen + H2O = hydroxymethylbilane + 4 NH4(+). Its pathway is porphyrin-containing compound metabolism; protoporphyrin-IX biosynthesis; coproporphyrinogen-III from 5-aminolevulinate: step 2/4. In terms of biological role, tetrapolymerization of the monopyrrole PBG into the hydroxymethylbilane pre-uroporphyrinogen in several discrete steps. The sequence is that of Porphobilinogen deaminase from Geobacter sulfurreducens (strain ATCC 51573 / DSM 12127 / PCA).